Here is a 362-residue protein sequence, read N- to C-terminus: Dihydroorotate dehydrogenase (quinone) (362 aa).

FMN is bound by residues 60 to 64 (AGFDK) and Thr-84. Residue Lys-64 coordinates substrate. Substrate is bound at residue 109–113 (NRMGF). The FMN site is built by Asn-137 and Asn-168. Asn-168 is a substrate binding site. The active-site Nucleophile is the Ser-171. Residue Asn-173 coordinates substrate. 2 residues coordinate FMN: Lys-213 and Ser-241. 242 to 243 (NT) contacts substrate. FMN contacts are provided by residues Gly-264, Gly-293, and 314-315 (YS).

Belongs to the dihydroorotate dehydrogenase family. Type 2 subfamily. As to quaternary structure, monomer. It depends on FMN as a cofactor.

The protein resides in the cell membrane. It catalyses the reaction (S)-dihydroorotate + a quinone = orotate + a quinol. It functions in the pathway pyrimidine metabolism; UMP biosynthesis via de novo pathway; orotate from (S)-dihydroorotate (quinone route): step 1/1. Functionally, catalyzes the conversion of dihydroorotate to orotate with quinone as electron acceptor. The chain is Dihydroorotate dehydrogenase (quinone) from Bartonella henselae (strain ATCC 49882 / DSM 28221 / CCUG 30454 / Houston 1) (Rochalimaea henselae).